The primary structure comprises 229 residues: Ribulose-phosphate 3-epimerase (229 aa).

Ser12 contributes to the substrate binding site. Positions 37, 39, and 70 each coordinate a divalent metal cation. Asp39 functions as the Proton acceptor in the catalytic mechanism. Residues His70, 146-149, 181-183, and 203-204 contribute to the substrate site; these read GFTG, DGG, and AS. Asp181 is a binding site for a divalent metal cation. Asp181 acts as the Proton donor in catalysis.

This sequence belongs to the ribulose-phosphate 3-epimerase family. Requires a divalent metal cation as cofactor.

The enzyme catalyses D-ribulose 5-phosphate = D-xylulose 5-phosphate. The protein operates within carbohydrate degradation. Functionally, catalyzes the reversible epimerization of D-ribulose 5-phosphate to D-xylulose 5-phosphate. This is Ribulose-phosphate 3-epimerase from Chlamydia pneumoniae (Chlamydophila pneumoniae).